The primary structure comprises 346 residues: GTPase Obg (346 aa).

The Obg domain occupies 1–159; the sequence is MKFLDSAKIY…RTVLLRLKLI (159 aa). Residues 160 to 327 enclose the OBG-type G domain; that stretch reads ADAGLVGLPN…ALRAVLAEID (168 aa). Residues 166–173, 191–195, 212–215, 279–282, and 308–310 each bind GTP; these read GLPNAGKS, FTTLN, DIPG, SKVD, and SAA. Mg(2+) contacts are provided by Ser-173 and Thr-193.

Belongs to the TRAFAC class OBG-HflX-like GTPase superfamily. OBG GTPase family. As to quaternary structure, monomer. Requires Mg(2+) as cofactor.

The protein resides in the cytoplasm. In terms of biological role, an essential GTPase which binds GTP, GDP and possibly (p)ppGpp with moderate affinity, with high nucleotide exchange rates and a fairly low GTP hydrolysis rate. Plays a role in control of the cell cycle, stress response, ribosome biogenesis and in those bacteria that undergo differentiation, in morphogenesis control. The sequence is that of GTPase Obg from Methylocella silvestris (strain DSM 15510 / CIP 108128 / LMG 27833 / NCIMB 13906 / BL2).